The sequence spans 425 residues: 3-phosphoshikimate 1-carboxyvinyltransferase (425 aa).

Lys23, Ser24, and Arg28 together coordinate 3-phosphoshikimate. Lys23 serves as a coordination point for phosphoenolpyruvate. Positions 96 and 124 each coordinate phosphoenolpyruvate. Positions 170, 171, 172, 198, 314, and 341 each coordinate 3-phosphoshikimate. Gln172 serves as a coordination point for phosphoenolpyruvate. Asp314 functions as the Proton acceptor in the catalytic mechanism. Arg345, Arg386, and Lys411 together coordinate phosphoenolpyruvate.

Belongs to the EPSP synthase family. As to quaternary structure, monomer.

Its subcellular location is the cytoplasm. The enzyme catalyses 3-phosphoshikimate + phosphoenolpyruvate = 5-O-(1-carboxyvinyl)-3-phosphoshikimate + phosphate. It participates in metabolic intermediate biosynthesis; chorismate biosynthesis; chorismate from D-erythrose 4-phosphate and phosphoenolpyruvate: step 6/7. Functionally, catalyzes the transfer of the enolpyruvyl moiety of phosphoenolpyruvate (PEP) to the 5-hydroxyl of shikimate-3-phosphate (S3P) to produce enolpyruvyl shikimate-3-phosphate and inorganic phosphate. This is 3-phosphoshikimate 1-carboxyvinyltransferase from Nostoc sp. (strain PCC 7120 / SAG 25.82 / UTEX 2576).